A 444-amino-acid chain; its full sequence is Phosphoglucosamine mutase (444 aa).

Ser-104 acts as the Phosphoserine intermediate in catalysis. Mg(2+)-binding residues include Ser-104, Asp-243, Asp-245, and Asp-247. Phosphoserine is present on Ser-104.

This sequence belongs to the phosphohexose mutase family. Requires Mg(2+) as cofactor. In terms of processing, activated by phosphorylation.

The enzyme catalyses alpha-D-glucosamine 1-phosphate = D-glucosamine 6-phosphate. Functionally, catalyzes the conversion of glucosamine-6-phosphate to glucosamine-1-phosphate. This chain is Phosphoglucosamine mutase, found in Neisseria meningitidis serogroup C / serotype 2a (strain ATCC 700532 / DSM 15464 / FAM18).